The primary structure comprises 512 residues: V-type proton ATPase subunit B (512 aa).

Residue Arg381 coordinates ATP. A disordered region spans residues 484 to 512 (LYGRDREQDDDEDEDEEDPDKSGDKLIDA). Over residues 491–502 (QDDDEDEDEEDP) the composition is skewed to acidic residues. Residues 503 to 512 (DKSGDKLIDA) are compositionally biased toward basic and acidic residues.

This sequence belongs to the ATPase alpha/beta chains family. In terms of assembly, V-ATPase is a heteromultimeric enzyme composed of a peripheral catalytic V1 complex (components A to H) attached to an integral membrane V0 proton pore complex (components: a, c, c', c'', d, e, f and VOA1).

Its subcellular location is the vacuole membrane. Non-catalytic subunit of the V1 complex of vacuolar(H+)-ATPase (V-ATPase), a multisubunit enzyme composed of a peripheral complex (V1) that hydrolyzes ATP and a membrane integral complex (V0) that translocates protons. Plays an important role in resistance to several stresses, as well as in autophagy and virulence. The chain is V-type proton ATPase subunit B from Candida albicans (strain SC5314 / ATCC MYA-2876) (Yeast).